Reading from the N-terminus, the 61-residue chain is Large ribosomal subunit protein uL30 (61 aa).

The protein belongs to the universal ribosomal protein uL30 family. In terms of assembly, part of the 50S ribosomal subunit.

This is Large ribosomal subunit protein uL30 from Frankia casuarinae (strain DSM 45818 / CECT 9043 / HFP020203 / CcI3).